Consider the following 302-residue polypeptide: Probable 2-(5''-triphosphoribosyl)-3'-dephosphocoenzyme-A synthase 1 (302 aa).

This sequence belongs to the CitG/MdcB family.

The enzyme catalyses 3'-dephospho-CoA + ATP = 2'-(5''-triphospho-alpha-D-ribosyl)-3'-dephospho-CoA + adenine. The polypeptide is Probable 2-(5''-triphosphoribosyl)-3'-dephosphocoenzyme-A synthase 1 (Salmonella typhi).